The primary structure comprises 418 residues: ATP phosphoribosyltransferase regulatory subunit (418 aa).

It belongs to the class-II aminoacyl-tRNA synthetase family. HisZ subfamily. As to quaternary structure, heteromultimer composed of HisG and HisZ subunits.

Its subcellular location is the cytoplasm. The protein operates within amino-acid biosynthesis; L-histidine biosynthesis; L-histidine from 5-phospho-alpha-D-ribose 1-diphosphate: step 1/9. Required for the first step of histidine biosynthesis. May allow the feedback regulation of ATP phosphoribosyltransferase activity by histidine. The chain is ATP phosphoribosyltransferase regulatory subunit from Acetivibrio thermocellus (strain ATCC 27405 / DSM 1237 / JCM 9322 / NBRC 103400 / NCIMB 10682 / NRRL B-4536 / VPI 7372) (Clostridium thermocellum).